The chain runs to 254 residues: Leucyl/phenylalanyl-tRNA--protein transferase (254 aa).

Belongs to the L/F-transferase family.

It is found in the cytoplasm. The catalysed reaction is N-terminal L-lysyl-[protein] + L-leucyl-tRNA(Leu) = N-terminal L-leucyl-L-lysyl-[protein] + tRNA(Leu) + H(+). It carries out the reaction N-terminal L-arginyl-[protein] + L-leucyl-tRNA(Leu) = N-terminal L-leucyl-L-arginyl-[protein] + tRNA(Leu) + H(+). It catalyses the reaction L-phenylalanyl-tRNA(Phe) + an N-terminal L-alpha-aminoacyl-[protein] = an N-terminal L-phenylalanyl-L-alpha-aminoacyl-[protein] + tRNA(Phe). Its function is as follows. Functions in the N-end rule pathway of protein degradation where it conjugates Leu, Phe and, less efficiently, Met from aminoacyl-tRNAs to the N-termini of proteins containing an N-terminal arginine or lysine. This Bordetella bronchiseptica (strain ATCC BAA-588 / NCTC 13252 / RB50) (Alcaligenes bronchisepticus) protein is Leucyl/phenylalanyl-tRNA--protein transferase.